The chain runs to 501 residues: MPSASASRKSQEKPREIMDAAEDYAKERYGISSMIQSQEKSDRVLVRVRDLTIQKADEVVWVRARVHTSRAKGKQCFLVLRQQQFNVQALVAVGDHASKQMVKFAANINKESIVDVEGVVRKVNQKIESCTQQDVELHVQKIYVISLAEPRLPLQLDDAVRPEAEGEEEGRATVNQDTRLDNRVIDLRTSTSQAVFRLQSGICHLFRETLINKGFVEIQTPKIISAASEGGANVFTVSYFKNNAYLAQSPQLYKQMCICADFEKVFCIGPVFRAEDSNTHRHLTEFVGLDIEMAFNYHYHEVMEEIADTMVQIFKGLQERFQTEIQTVNKQFPCEPFKFLEPTLRLEYCEALAMLREAGVEMGDEDDLSTPNEKLLGHLIKEKYDTDFYILDKYPLAVRPFYTMPDPRNPKQSNSYDMFMRGEEILSGAQRIHDPQLLTERALHHGIDLEKIKAYIDSFRFGAPPHAGGGIGLERVTMLFLGLHNVRQTSMFPRDPKRLTP.

A Phosphothreonine modification is found at T52. K74 is modified (N6-acetyllysine). Residue E229 coordinates L-aspartate. Position 249 is a phosphoserine (S249). The segment at 251–254 (QLYK) is aspartate. R273 serves as a coordination point for L-aspartate. ATP-binding positions include 273 to 275 (RAE) and 281 to 283 (RHL). The residue at position 374 (K374) is an N6-acetyllysine. The segment at 411-415 (KQSNS) is binding site for the 3'-end of tRNA. E424 is an ATP binding site. S427 and R431 together coordinate L-aspartate. Position 472–475 (472–475 (GLER)) interacts with ATP. At T500 the chain carries Phosphothreonine; by PKA.

Belongs to the class-II aminoacyl-tRNA synthetase family. Type 2 subfamily. In terms of assembly, homodimer. Part of a multisubunit complex that groups tRNA ligases for Arg (RARS1), Asp (DARS1), Gln (QARS1), Ile (IARS1), Leu (LARS1), Lys (KARS1), Met (MARS1) the bifunctional ligase for Glu and Pro (EPRS1) and the auxiliary subunits AIMP1/p43, AIMP2/p38 and EEF1E1/p18.

It is found in the cytoplasm. It catalyses the reaction tRNA(Asp) + L-aspartate + ATP = L-aspartyl-tRNA(Asp) + AMP + diphosphate. Its function is as follows. Catalyzes the specific attachment of an amino acid to its cognate tRNA in a 2 step reaction: the amino acid (AA) is first activated by ATP to form AA-AMP and then transferred to the acceptor end of the tRNA. The sequence is that of Aspartate--tRNA ligase, cytoplasmic (DARS1) from Pongo abelii (Sumatran orangutan).